A 215-amino-acid chain; its full sequence is Probable GTP-binding protein EngB (215 aa).

The region spanning 26-200 is the EngB-type G domain; sequence EGIEVAFAGR…RAKLDEWFAP (175 aa). Residues 34–41, 61–65, 79–82, 146–149, and 179–181 contribute to the GTP site; these read GRSNAGKS, GRTQL, DLPG, TKAD, and FSS. Mg(2+)-binding residues include Ser-41 and Thr-63.

The protein belongs to the TRAFAC class TrmE-Era-EngA-EngB-Septin-like GTPase superfamily. EngB GTPase family. It depends on Mg(2+) as a cofactor.

Functionally, necessary for normal cell division and for the maintenance of normal septation. In Aliivibrio fischeri (strain MJ11) (Vibrio fischeri), this protein is Probable GTP-binding protein EngB.